The primary structure comprises 184 residues: Ribosome-recycling factor (184 aa).

The protein belongs to the RRF family.

The protein resides in the cytoplasm. Functionally, responsible for the release of ribosomes from messenger RNA at the termination of protein biosynthesis. May increase the efficiency of translation by recycling ribosomes from one round of translation to another. This is Ribosome-recycling factor from Psychrobacter arcticus (strain DSM 17307 / VKM B-2377 / 273-4).